Consider the following 446-residue polypeptide: MMGVNSSGRPDLYGHLHSILLPGRGLPDWSPDGGADPGVSTWTPRLLSGVPEVAASPSPSWDGTWDNVSGCGEQINYGRAEKVVIGSILTLITLLTIAGNCLVVISVCFVKKLRQPSNYLIVSLALADLSVAVAVIPFVSVTDLIGGKWIFGHFFCNVFIAMDVMCCTASIMTLCVISIDRYLGITRPLTYPVRQNGKCMPKMILSVWLLSASITLPPLFGWAQNVNDDKVCLISQDFGYTIYSTAVAFYIPMSVMLFMYYRIYKAARKSAAKHKFPGFPRVQPESIISLNGMVKLQKEVEECANLSRLLKHERKNISIFKREQKAATTLGIIVGAFTVCWLPFFLLSTARPFICGTACSCIPLWVERTCLWLGYANSLINPFIYAFFNRDLRTTYRSLLQCQYRNINRKLSAAGMHEALKLAERPERPECVLQNSDYCRKKGHDS.

The Extracellular portion of the chain corresponds to 1-84; it reads MMGVNSSGRP…INYGRAEKVV (84 aa). Residues Asn-5 and Asn-67 are each glycosylated (N-linked (GlcNAc...) asparagine). The chain crosses the membrane as a helical span at residues 85–109; the sequence is IGSILTLITLLTIAGNCLVVISVCF. The Cytoplasmic segment spans residues 110–119; that stretch reads VKKLRQPSNY. Residues 120 to 141 form a helical membrane-spanning segment; it reads LIVSLALADLSVAVAVIPFVSV. Topologically, residues 142–153 are extracellular; sequence TDLIGGKWIFGH. The helical transmembrane segment at 154 to 179 threads the bilayer; the sequence is FFCNVFIAMDVMCCTASIMTLCVISI. Cysteines 156 and 232 form a disulfide. Asp-163 lines the serotonin pocket. Residues 180–199 lie on the Cytoplasmic side of the membrane; that stretch reads DRYLGITRPLTYPVRQNGKC. A helical transmembrane segment spans residues 200 to 220; the sequence is MPKMILSVWLLSASITLPPLF. At 221-238 the chain is on the extracellular side; sequence GWAQNVNDDKVCLISQDF. The chain crosses the membrane as a helical span at residues 239–261; that stretch reads GYTIYSTAVAFYIPMSVMLFMYY. Over 262 to 327 the chain is Cytoplasmic; sequence RIYKAARKSA…SIFKREQKAA (66 aa). Residues 328 to 353 form a helical membrane-spanning segment; it reads TTLGIIVGAFTVCWLPFFLLSTARPF. Residues 354-364 are Extracellular-facing; the sequence is ICGTACSCIPL. The helical transmembrane segment at 365–388 threads the bilayer; sequence WVERTCLWLGYANSLINPFIYAFF. Residues 389-446 lie on the Cytoplasmic side of the membrane; the sequence is NRDLRTTYRSLLQCQYRNINRKLSAAGMHEALKLAERPERPECVLQNSDYCRKKGHDS. Cys-402 carries the S-palmitoyl cysteine lipid modification.

It belongs to the G-protein coupled receptor 1 family.

The protein resides in the cell membrane. Its function is as follows. G-protein coupled receptor for 5-hydroxytryptamine (serotonin), a biogenic hormone that functions as a neurotransmitter, a hormone and a mitogen. Ligand binding causes a conformation change that triggers signaling via guanine nucleotide-binding proteins (G proteins) and modulates the activity of downstream effectors. HTR7 is coupled to G(s) G alpha proteins and mediates activation of adenylate cyclase activity. The chain is 5-hydroxytryptamine receptor 7 (HTR7) from Cavia porcellus (Guinea pig).